The chain runs to 122 residues: uncharacterized protein (122 aa).

This is an uncharacterized protein from Haemophilus phage HP1 (strain HP1c1) (Bacteriophage HP1).